A 204-amino-acid chain; its full sequence is INSIG protein homolog (204 aa).

Transmembrane regions (helical) follow at residues 5–27 (ISEAVVLFLLGAVAALIGDHSHV), 47–64 (FWFPILVGAATASLAELR), 76–97 (ARQALGGVAAVVGTYVTTALVH), 101–118 (VVPVTALVCAAAAITWCV), and 124–145 (GAACGVVIAVIGPAVEIALVQL). A 1,2-diacyl-sn-glycerol is bound at residue His-26. Tyr-150 lines the a 1,2-diacyl-sn-glycerol pocket. A helical transmembrane segment spans residues 162–179 (PFLAPLYFAFGVVAALLG).

It belongs to the INSIG family. Homotrimer.

The protein localises to the membrane. Diacylglycerol-binding protein. The protein is INSIG protein homolog of Mycolicibacterium vanbaalenii (strain DSM 7251 / JCM 13017 / BCRC 16820 / KCTC 9966 / NRRL B-24157 / PYR-1) (Mycobacterium vanbaalenii).